The primary structure comprises 259 residues: Type III pantothenate kinase (259 aa).

ATP is bound at residue 6-13 (DVGNTNCT). 107 to 110 (GSDR) lines the substrate pocket. Catalysis depends on Asp-109, which acts as the Proton acceptor. Asp-129 contributes to the K(+) binding site. Thr-132 contacts ATP. Thr-184 contributes to the substrate binding site.

This sequence belongs to the type III pantothenate kinase family. In terms of assembly, homodimer. The cofactor is NH4(+). It depends on K(+) as a cofactor.

Its subcellular location is the cytoplasm. The catalysed reaction is (R)-pantothenate + ATP = (R)-4'-phosphopantothenate + ADP + H(+). It participates in cofactor biosynthesis; coenzyme A biosynthesis; CoA from (R)-pantothenate: step 1/5. Its function is as follows. Catalyzes the phosphorylation of pantothenate (Pan), the first step in CoA biosynthesis. This chain is Type III pantothenate kinase, found in Listeria monocytogenes serotype 4b (strain CLIP80459).